An 861-amino-acid chain; its full sequence is Alpha-actinin A (861 aa).

The tract at residues 1–239 (MSEEPTPVSG…VMTYVAQYYH (239 aa)) is actin-binding. Calponin-homology (CH) domains are found at residues 22–127 (ITQK…LRFA) and 136–242 (LSAK…HHFS). Spectrin repeat units follow at residues 240–365 (HFSA…ALEK), 366–480 (AEQE…TGVK), 481–601 (SSAE…EERK), and 602–714 (VQLA…EQVV). EF-hand domains follow at residues 729–764 (EELS…IGDE) and 765–800 (LTEE…SRKG). Ca(2+) contacts are provided by aspartate 742, aspartate 744, aspartate 746, lysine 748, glutamate 753, aspartate 778, aspartate 780, asparagine 782, threonine 784, and glutamate 789.

The protein belongs to the alpha-actinin family. Homodimer; antiparallel.

It is found in the cytoplasm. It localises to the cell cortex. Its subcellular location is the contractile vacuole. The protein localises to the cytoplasmic vesicle. The protein resides in the phagosome. Functionally, F-actin cross-linking protein which is thought to anchor actin to a variety of intracellular structures. This is a bundling protein. Increases the actin-stimulated ATPase activity of myosin. Involved in vegetative cell growth, phagocytosis, motility and development, probably through stabilization of the actin network in the cortical cytoskeleton. This is Alpha-actinin A (abpA) from Dictyostelium discoideum (Social amoeba).